Here is a 1062-residue protein sequence, read N- to C-terminus: NACHT, LRR and PYD domains-containing protein 2 (1062 aa).

The 94-residue stretch at 1–94 folds into the Pyrin domain; the sequence is MVSSAQMGFN…SERAKDEVRE (94 aa). The region spanning 207 to 526 is the NACHT domain; the sequence is YTVVLYGPAG…LEKEEEEDRD (320 aa). Position 213–220 (213–220) interacts with ATP; that stretch reads GPAGLGKT. Position 671 is a phosphoserine (Ser671). LRR repeat units follow at residues 812 to 832, 841 to 861, 869 to 889, 898 to 918, 926 to 946, 955 to 976, 983 to 1003, and 1010 to 1033; these read SLTCVNLSDNELLDEGAKLLY, FLQRLSLENCHLTEANCKDLA, ELTHLCLAKNPIGNTGVKFLC, KLQTLVLWNCDITSDGCCDLT, SLLCLDLGLNHIGVKGMKFLC, NLRCLWLWGCSIPPFSCEDLCS, SLVTLDLGQNPLGSSGVKMLF, and SGTLRTLRLKIDDFNDELNKLLEE.

It belongs to the NLRP family. In terms of assembly, interacts with CHUK. Interacts with IKBKB. Interacts with IKBKG. Interacts with MEFV. Interacts with PYCARD. Interacts (via pyrin domain) with PYDC2. Interacts with CARD8. As to expression, expressed at high levels in lung, placenta and thymus and at lower levels in ovary, intestine and brain. Highly abundant in oocytes and early embryos, however poorly expressed in somatic tissues such as brain, kidney, liver and spinal cord.

It is found in the cytoplasm. Its function is as follows. Suppresses TNF- and CD40-induced NFKB1 activity at the level of the IKK complex, by inhibiting NFKBIA degradation induced by TNF. When associated with PYCARD, activates CASP1, leading to the secretion of mature pro-inflammatory cytokine IL1B. May be a component of the inflammasome, a protein complex which also includes PYCARD, CARD8 and CASP1 and whose function would be the activation of pro-inflammatory caspases. The protein is NACHT, LRR and PYD domains-containing protein 2 (NLRP2) of Homo sapiens (Human).